The primary structure comprises 340 residues: Dihydroorotate dehydrogenase (quinone) (340 aa).

Residues alanine 63–lysine 67 and threonine 87 each bind FMN. Position 67 (lysine 67) interacts with substrate. Asparagine 112–phenylalanine 116 contributes to the substrate binding site. FMN-binding residues include asparagine 140 and asparagine 173. Asparagine 173 contacts substrate. Residue serine 176 is the Nucleophile of the active site. Substrate is bound at residue asparagine 178. The FMN site is built by lysine 218 and threonine 246. Asparagine 247 to threonine 248 serves as a coordination point for substrate. FMN is bound by residues glycine 269, glycine 298, and tyrosine 319–threonine 320.

This sequence belongs to the dihydroorotate dehydrogenase family. Type 2 subfamily. In terms of assembly, monomer. FMN is required as a cofactor.

It is found in the cell membrane. The enzyme catalyses (S)-dihydroorotate + a quinone = orotate + a quinol. It participates in pyrimidine metabolism; UMP biosynthesis via de novo pathway; orotate from (S)-dihydroorotate (quinone route): step 1/1. Its function is as follows. Catalyzes the conversion of dihydroorotate to orotate with quinone as electron acceptor. This is Dihydroorotate dehydrogenase (quinone) from Methylococcus capsulatus (strain ATCC 33009 / NCIMB 11132 / Bath).